A 254-amino-acid polypeptide reads, in one-letter code: tRNA (guanine-N(1)-)-methyltransferase (254 aa).

S-adenosyl-L-methionine is bound by residues glycine 112 and 131-136 (IGDFIL).

The protein belongs to the RNA methyltransferase TrmD family. As to quaternary structure, homodimer.

Its subcellular location is the cytoplasm. It catalyses the reaction guanosine(37) in tRNA + S-adenosyl-L-methionine = N(1)-methylguanosine(37) in tRNA + S-adenosyl-L-homocysteine + H(+). In terms of biological role, specifically methylates guanosine-37 in various tRNAs. This is tRNA (guanine-N(1)-)-methyltransferase from Persephonella marina (strain DSM 14350 / EX-H1).